Here is a 542-residue protein sequence, read N- to C-terminus: LysM domain-containing protein ARB_00327 (542 aa).

The first 35 residues, 1-35 (MLSSVLFPAMRTLLLLKYVFSLISLSAICCQTVSA), serve as a signal peptide directing secretion. Residues Asn218, Asn298, Asn381, and Asn415 are each glycosylated (N-linked (GlcNAc...) asparagine). A LysM 1 domain is found at 264 to 310 (RWYGVKKGDYCNLIVLKFGITMDNFIFLNPALNSNCTNLYAEESYCV). Positions 439–484 (DSDEPTPTTPITTSDDPTSTSATPTTPTTSSKPSPGAPTMTGQPSA) are disordered. The segment covering 443-472 (PTPTTPITTSDDPTSTSATPTTPTTSSKPS) has biased composition (low complexity). A LysM 2 domain is found at 487-534 (KWHTVTNGESCTVIPKTFGITLEQFLAWNPTVKSDCTENFWAGYAYCV).

It is found in the secreted. Its function is as follows. Might have a role in sequestration of chitin oligosaccharides (breakdown products of fungal cell walls that are released during invasion and act as triggers of host immunity) to dampen host defense. In Arthroderma benhamiae (strain ATCC MYA-4681 / CBS 112371) (Trichophyton mentagrophytes), this protein is LysM domain-containing protein ARB_00327.